Consider the following 130-residue polypeptide: Gonadotropin subunit beta-1 (130 aa).

A signal peptide spans 1–18 (MRMRFVVMVILLPALMMS). Disulfide bonds link Cys26-Cys74, Cys40-Cys89, Cys51-Cys105, Cys55-Cys107, and Cys110-Cys117. N-linked (GlcNAc...) asparagine glycosylation occurs at Asn30.

Belongs to the glycoprotein hormones subunit beta family. As to quaternary structure, heterodimer of an alpha and a beta chain.

The protein localises to the secreted. Functionally, involved in gametogenesis and steroidogenesis. The polypeptide is Gonadotropin subunit beta-1 (cgba) (Carassius auratus (Goldfish)).